Consider the following 292-residue polypeptide: Aquaporin-3 (292 aa).

At 1–24 the chain is on the cytoplasmic side; sequence MGRQKELVNRCGEMLHIRYRLLRQ. Residues 25–42 form a helical membrane-spanning segment; that stretch reads ALAECLGTLILVMFGCGS. Residues 43-56 are Extracellular-facing; sequence VAQVVLSRGTHGGF. A helical transmembrane segment spans residues 57–74; it reads LTINLAFGFAVTLGILIA. Residues 75–78 are Cytoplasmic-facing; that stretch reads GQVS. An intramembrane region (discontinuously helical) is located at residues 79–92; it reads GAHLNPAVTFAMCF. An NPA 1 motif is present at residues 83–85; it reads NPA. At 93–100 the chain is on the cytoplasmic side; sequence LAREPWIK. A helical membrane pass occupies residues 101–121; it reads LPVYTLAQTLGAFLGAGIIFG. At 122–159 the chain is on the extracellular side; the sequence is LYYDAIWAFANNQLIVSGPNGTAGIFATYPSGHLDMVN. Residue asparagine 141 is glycosylated (N-linked (GlcNAc...) asparagine). A helical transmembrane segment spans residues 160 to 177; it reads GFFDQFIGTASLIVCVLA. Residues 178–189 lie on the Cytoplasmic side of the membrane; that stretch reads IVDPYNNPVPRG. A helical transmembrane segment spans residues 190–206; it reads LEAFTVGLVVLVIGTSM. Over 207-210 the chain is Extracellular; that stretch reads GFNS. Positions 211–224 form an intramembrane region, discontinuously helical; that stretch reads GYAVNPARDFGPRL. The NPA 2 signature appears at 215 to 217; sequence NPA. The Extracellular segment spans residues 225-242; it reads FTAIAGWGSEVFTTGRHW. Residues 243–264 traverse the membrane as a helical segment; it reads WWVPIVSPLLGSIAGVFVYQLM. The Cytoplasmic segment spans residues 265–292; that stretch reads IGCHLEPPPPSTDEENVKLSHVKHKEQM.

Belongs to the MIP/aquaporin (TC 1.A.8) family. Homotetramer; each monomer provides an independent glycerol/water pore. Could also exist in other oligomeric states.

The protein resides in the cell membrane. It localises to the basolateral cell membrane. The catalysed reaction is glycerol(in) = glycerol(out). It carries out the reaction H2O(in) = H2O(out). It catalyses the reaction urea(in) = urea(out). The enzyme catalyses H2O2(out) = H2O2(in). Its function is as follows. Aquaglyceroporins form homotetrameric transmembrane channels, with each monomer independently mediating glycerol and water transport across the plasma membrane along their osmotic gradient. Could also be permeable to urea. Also participates in cell permeability to H2O2 and H2O2-mediated signaling. In skin, transports glycerol to the epidermis and stratum corneum, where it maintains hydration, elasticity, and supports lipid biosynthesis for barrier repair. In kidney, contributes to the reabsorption of water, helping the body maintain proper fluid balance. This is Aquaporin-3 from Bos taurus (Bovine).